Consider the following 605-residue polypeptide: Condensin-2 complex subunit H2 (605 aa).

The residue at position 19 (Thr-19) is a Phosphothreonine. A phosphoserine mark is found at Ser-95, Ser-200, Ser-208, Ser-228, and Ser-232. The tract at residues 194–331 (LEPEGMSPME…PFDSLESKPF (138 aa)) is disordered. The span at 256 to 266 (GEDEDAEEAVE) shows a compositional bias: acidic residues. Phosphoserine is present on residues Ser-282, Ser-284, Ser-466, and Ser-492.

It belongs to the CND2 H2 (condensin-2 subunit 2) family. As to quaternary structure, component of the condensin-2 complex, which contains the SMC2 and SMC4 heterodimer, and three non SMC subunits, NCAPG2, NCAPH2 and NCAPD3 that probably regulate the complex.

Its subcellular location is the nucleus. It localises to the chromosome. Its function is as follows. Regulatory subunit of the condensin-2 complex, a complex that seems to provide chromosomes with an additional level of organization and rigidity and in establishing mitotic chromosome architecture. May promote the resolution of double-strand DNA catenanes (intertwines) between sister chromatids. Condensin-mediated compaction likely increases tension in catenated sister chromatids, providing directionality for type II topoisomerase-mediated strand exchanges toward chromatid decatenation. Required for decatenation of chromatin bridges at anaphase. Early in neurogenesis, may play an essential role to ensure accurate mitotic chromosome condensation in neuron stem cells, ultimately affecting neuron pool and cortex size. Seems to have lineage-specific role in T-cell development. In Homo sapiens (Human), this protein is Condensin-2 complex subunit H2 (NCAPH2).